A 323-amino-acid chain; its full sequence is o-succinylbenzoate synthase (323 aa).

The active-site Proton donor is lysine 134. The Mg(2+) site is built by aspartate 162, glutamate 191, and aspartate 214. The Proton acceptor role is filled by lysine 236.

The protein belongs to the mandelate racemase/muconate lactonizing enzyme family. MenC type 1 subfamily. Requires a divalent metal cation as cofactor.

The enzyme catalyses (1R,6R)-6-hydroxy-2-succinyl-cyclohexa-2,4-diene-1-carboxylate = 2-succinylbenzoate + H2O. It functions in the pathway quinol/quinone metabolism; 1,4-dihydroxy-2-naphthoate biosynthesis; 1,4-dihydroxy-2-naphthoate from chorismate: step 4/7. Its pathway is quinol/quinone metabolism; menaquinone biosynthesis. Its function is as follows. Converts 2-succinyl-6-hydroxy-2,4-cyclohexadiene-1-carboxylate (SHCHC) to 2-succinylbenzoate (OSB). In Photorhabdus laumondii subsp. laumondii (strain DSM 15139 / CIP 105565 / TT01) (Photorhabdus luminescens subsp. laumondii), this protein is o-succinylbenzoate synthase.